Consider the following 439-residue polypeptide: Xylose isomerase (439 aa).

Residues His100 and Asp103 contribute to the active site. Residues Glu231, Glu267, His270, Asp295, Asp306, Asp308, and Asp338 each coordinate Mg(2+).

The protein belongs to the xylose isomerase family. Homotetramer. Mg(2+) serves as cofactor.

The protein localises to the cytoplasm. It catalyses the reaction alpha-D-xylose = alpha-D-xylulofuranose. This is Xylose isomerase from Rhodopirellula baltica (strain DSM 10527 / NCIMB 13988 / SH1).